We begin with the raw amino-acid sequence, 203 residues long: ATP-dependent Clp protease proteolytic subunit (203 aa).

Ser107 (nucleophile) is an active-site residue. His132 is an active-site residue.

Belongs to the peptidase S14 family. In terms of assembly, fourteen ClpP subunits assemble into 2 heptameric rings which stack back to back to give a disk-like structure with a central cavity, resembling the structure of eukaryotic proteasomes.

Its subcellular location is the cytoplasm. It catalyses the reaction Hydrolysis of proteins to small peptides in the presence of ATP and magnesium. alpha-casein is the usual test substrate. In the absence of ATP, only oligopeptides shorter than five residues are hydrolyzed (such as succinyl-Leu-Tyr-|-NHMec, and Leu-Tyr-Leu-|-Tyr-Trp, in which cleavage of the -Tyr-|-Leu- and -Tyr-|-Trp bonds also occurs).. Cleaves peptides in various proteins in a process that requires ATP hydrolysis. Has a chymotrypsin-like activity. Plays a major role in the degradation of misfolded proteins. The polypeptide is ATP-dependent Clp protease proteolytic subunit (Shewanella sediminis (strain HAW-EB3)).